A 394-amino-acid polypeptide reads, in one-letter code: Formate-dependent phosphoribosylglycinamide formyltransferase (394 aa).

N(1)-(5-phospho-beta-D-ribosyl)glycinamide contacts are provided by residues 22–23 and Glu82; that span reads EL. ATP-binding positions include Arg114, Lys155, 160-165, 195-198, and Glu203; these read SSGKGQ and EGFV. The ATP-grasp domain occupies 119 to 308; that stretch reads RLAAETLKLP…EFALHVRAIL (190 aa). Mg(2+) contacts are provided by Glu267 and Glu279. Residues Asp286, Lys357, and 364–365 contribute to the N(1)-(5-phospho-beta-D-ribosyl)glycinamide site; that span reads RR.

Belongs to the PurK/PurT family. In terms of assembly, homodimer.

The enzyme catalyses N(1)-(5-phospho-beta-D-ribosyl)glycinamide + formate + ATP = N(2)-formyl-N(1)-(5-phospho-beta-D-ribosyl)glycinamide + ADP + phosphate + H(+). Its pathway is purine metabolism; IMP biosynthesis via de novo pathway; N(2)-formyl-N(1)-(5-phospho-D-ribosyl)glycinamide from N(1)-(5-phospho-D-ribosyl)glycinamide (formate route): step 1/1. Involved in the de novo purine biosynthesis. Catalyzes the transfer of formate to 5-phospho-ribosyl-glycinamide (GAR), producing 5-phospho-ribosyl-N-formylglycinamide (FGAR). Formate is provided by PurU via hydrolysis of 10-formyl-tetrahydrofolate. This is Formate-dependent phosphoribosylglycinamide formyltransferase from Tolumonas auensis (strain DSM 9187 / NBRC 110442 / TA 4).